A 357-amino-acid chain; its full sequence is DNA primase small subunit PriS (357 aa).

Active-site residues include Asp-105, Asp-107, and Asp-259.

The protein belongs to the eukaryotic-type primase small subunit family. As to quaternary structure, heterodimer of a small subunit (PriS) and a large subunit (PriL). Mg(2+) is required as a cofactor. Requires Mn(2+) as cofactor.

In terms of biological role, catalytic subunit of DNA primase, an RNA polymerase that catalyzes the synthesis of short RNA molecules used as primers for DNA polymerase during DNA replication. The small subunit contains the primase catalytic core and has DNA synthesis activity on its own. Binding to the large subunit stabilizes and modulates the activity, increasing the rate of DNA synthesis while decreasing the length of the DNA fragments, and conferring RNA synthesis capability. The DNA polymerase activity may enable DNA primase to also catalyze primer extension after primer synthesis. May also play a role in DNA repair. The protein is DNA primase small subunit PriS of Methanococcus maripaludis (strain C5 / ATCC BAA-1333).